A 239-amino-acid polypeptide reads, in one-letter code: uncharacterized protein (239 aa).

An S4 RNA-binding domain is found at 1 to 65 (MRLDKLLANS…DYREFIYLMM (65 aa)). Aspartate 103 acts as the Nucleophile in catalysis.

This sequence belongs to the pseudouridine synthase RsuA family.

The catalysed reaction is a uridine in RNA = a pseudouridine in RNA. This is an uncharacterized protein from Bacillus subtilis (strain 168).